We begin with the raw amino-acid sequence, 395 residues long: Imidazolonepropionase (395 aa).

2 residues coordinate Fe(3+): H63 and H65. Positions 63 and 65 each coordinate Zn(2+). R72, Y135, and H168 together coordinate 4-imidazolone-5-propanoate. Residue Y135 participates in N-formimidoyl-L-glutamate binding. Residue H233 coordinates Fe(3+). Position 233 (H233) interacts with Zn(2+). Q236 serves as a coordination point for 4-imidazolone-5-propanoate. D308 provides a ligand contact to Fe(3+). D308 contacts Zn(2+). N-formimidoyl-L-glutamate is bound by residues N310 and G312. T313 contributes to the 4-imidazolone-5-propanoate binding site.

This sequence belongs to the metallo-dependent hydrolases superfamily. HutI family. It depends on Zn(2+) as a cofactor. Requires Fe(3+) as cofactor.

It localises to the cytoplasm. The catalysed reaction is 4-imidazolone-5-propanoate + H2O = N-formimidoyl-L-glutamate. Its pathway is amino-acid degradation; L-histidine degradation into L-glutamate; N-formimidoyl-L-glutamate from L-histidine: step 3/3. Functionally, catalyzes the hydrolytic cleavage of the carbon-nitrogen bond in imidazolone-5-propanoate to yield N-formimidoyl-L-glutamate. It is the third step in the universal histidine degradation pathway. This Cereibacter sphaeroides (strain ATCC 17029 / ATH 2.4.9) (Rhodobacter sphaeroides) protein is Imidazolonepropionase.